The following is a 136-amino-acid chain: uncharacterized protein (136 aa).

This is an uncharacterized protein from Bacillus anthracis.